A 370-amino-acid chain; its full sequence is Dual-specificity RNA methyltransferase RlmN (370 aa).

Glutamate 93 acts as the Proton acceptor in catalysis. Residues 99–337 enclose the Radical SAM core domain; sequence EEGRGTLCVS…VTTVRKTRGD (239 aa). A disulfide bond links cysteine 106 and cysteine 343. [4Fe-4S] cluster is bound by residues cysteine 113, cysteine 117, and cysteine 120. Residues 167–168, serine 199, 221–223, and asparagine 300 each bind S-adenosyl-L-methionine; these read GE and SLH. Cysteine 343 acts as the S-methylcysteine intermediate in catalysis.

The protein belongs to the radical SAM superfamily. RlmN family. Requires [4Fe-4S] cluster as cofactor.

It localises to the cytoplasm. It carries out the reaction adenosine(2503) in 23S rRNA + 2 reduced [2Fe-2S]-[ferredoxin] + 2 S-adenosyl-L-methionine = 2-methyladenosine(2503) in 23S rRNA + 5'-deoxyadenosine + L-methionine + 2 oxidized [2Fe-2S]-[ferredoxin] + S-adenosyl-L-homocysteine. It catalyses the reaction adenosine(37) in tRNA + 2 reduced [2Fe-2S]-[ferredoxin] + 2 S-adenosyl-L-methionine = 2-methyladenosine(37) in tRNA + 5'-deoxyadenosine + L-methionine + 2 oxidized [2Fe-2S]-[ferredoxin] + S-adenosyl-L-homocysteine. Its function is as follows. Specifically methylates position 2 of adenine 2503 in 23S rRNA and position 2 of adenine 37 in tRNAs. m2A2503 modification seems to play a crucial role in the proofreading step occurring at the peptidyl transferase center and thus would serve to optimize ribosomal fidelity. The polypeptide is Dual-specificity RNA methyltransferase RlmN (Francisella tularensis subsp. novicida (strain U112)).